We begin with the raw amino-acid sequence, 336 residues long: Glyoxylate reductase (336 aa).

NADP(+) is bound by residues 158–161, 180–182, and 239–241; these read FGRI, SRT, and IAR. Residues Arg241 and Glu270 contribute to the active site. His288 acts as the Proton donor in catalysis. NADP(+) is bound at residue 288–290; it reads HIG.

The protein belongs to the D-isomer specific 2-hydroxyacid dehydrogenase family. GyaR subfamily. As to quaternary structure, homodimer.

The protein localises to the cytoplasm. The catalysed reaction is glycolate + NAD(+) = glyoxylate + NADH + H(+). This Pyrococcus furiosus (strain ATCC 43587 / DSM 3638 / JCM 8422 / Vc1) protein is Glyoxylate reductase.